Here is a 361-residue protein sequence, read N- to C-terminus: UDP-3-O-acylglucosamine N-acyltransferase (361 aa).

The active-site Proton acceptor is the His253.

Belongs to the transferase hexapeptide repeat family. LpxD subfamily. Homotrimer.

It carries out the reaction a UDP-3-O-[(3R)-3-hydroxyacyl]-alpha-D-glucosamine + a (3R)-hydroxyacyl-[ACP] = a UDP-2-N,3-O-bis[(3R)-3-hydroxyacyl]-alpha-D-glucosamine + holo-[ACP] + H(+). It functions in the pathway bacterial outer membrane biogenesis; LPS lipid A biosynthesis. In terms of biological role, catalyzes the N-acylation of UDP-3-O-acylglucosamine using 3-hydroxyacyl-ACP as the acyl donor. Is involved in the biosynthesis of lipid A, a phosphorylated glycolipid that anchors the lipopolysaccharide to the outer membrane of the cell. This is UDP-3-O-acylglucosamine N-acyltransferase from Burkholderia pseudomallei (strain 668).